The following is a 295-amino-acid chain: Probable aspartoacylase (295 aa).

Zn(2+) is bound by residues H16 and E19. Substrate contacts are provided by residues R58 and 65–66 (NR). Position 107 (H107) interacts with Zn(2+). Substrate contacts are provided by E166 and Y277.

This sequence belongs to the AspA/AstE family. Aspartoacylase subfamily. Zn(2+) is required as a cofactor.

The catalysed reaction is an N-acyl-L-aspartate + H2O = a carboxylate + L-aspartate. This Acaryochloris marina (strain MBIC 11017) protein is Probable aspartoacylase.